Consider the following 176-residue polypeptide: Ribosome maturation factor RimM (176 aa).

One can recognise a PRC barrel domain in the interval 93 to 172; it reads KDEFFQFDII…EILVKGARDI (80 aa).

The protein belongs to the RimM family. Binds ribosomal protein uS19.

It localises to the cytoplasm. Its function is as follows. An accessory protein needed during the final step in the assembly of 30S ribosomal subunit, possibly for assembly of the head region. Essential for efficient processing of 16S rRNA. May be needed both before and after RbfA during the maturation of 16S rRNA. It has affinity for free ribosomal 30S subunits but not for 70S ribosomes. In Campylobacter concisus (strain 13826), this protein is Ribosome maturation factor RimM.